The following is a 532-amino-acid chain: Phosphoenolpyruvate carboxykinase (ATP) (532 aa).

Positions 60, 200, and 206 each coordinate substrate. ATP-binding positions include Lys206, His225, and 242 to 250 (GLSGTGKTT). Lys206 and His225 together coordinate Mn(2+). Ser244 contacts substrate. Asp263 is a Mn(2+) binding site. ATP is bound by residues Glu291, Arg327, 443–444 (RI), and Thr449. Arg327 serves as a coordination point for substrate.

Belongs to the phosphoenolpyruvate carboxykinase (ATP) family. Monomer. Mn(2+) serves as cofactor.

It is found in the cytoplasm. The enzyme catalyses oxaloacetate + ATP = phosphoenolpyruvate + ADP + CO2. Its pathway is carbohydrate biosynthesis; gluconeogenesis. With respect to regulation, inhibited by p-chloromercuribenzoate. Involved in gluconeogenesis. Catalyzes the conversion of oxaloacetate (OAA) to phosphoenolpyruvate (PEP) through direct phosphoryl transfer between the nucleoside triphosphate and OAA. In Anaerobiospirillum succiniciproducens, this protein is Phosphoenolpyruvate carboxykinase (ATP).